We begin with the raw amino-acid sequence, 728 residues long: MVAIPRLARLSVPAWALSARGRFYATVSTPQTLVEKIVQKYAVGLSEGVKVRAGDYVMIKPEHVMTHDNTGPVISKFLSLSCSKLDNPRQPVFALDHDVQNQSETNQKKYKKIQAFAKEHGVDFYPAGRGIGHQIIVEEGYAWPGKMVVASDSHSNHYGGVGCLGTAIVRTDAAGIWATGKFWWQIPRIVSVSLDGRLSPGVTGKDVIVALAGLFNKDEVLNAAIEFTGSGVEHLSIDERLTIANMTTEWGAVAGVFPVDDKLKEWYQGILRKAELRKFISPTVPSTVGAKVHPRLNAARLDDAMTNRVVADPGAHYAARLSLDLSTLVPHVSGPNSVKVATALPKLLDPPIPINKAYLVSCTNSRASDIASAAQVLRGKKVAPGVEFYIAAASSRVQEDAEAAGDWQTLIDAGAKTLPAGCGPCIGLGVGLLEKGEVGISATNRNYKGRMGSPDAIAYLASPAVVAASAAKGVICGPESMDLSQLPQYEQPKFSIIKEGAAGEEKPVEVDEASLEPLLEGFPAYFEGPLLFAPQDNLTTDGMYPGKYTYQDDITPERQAEVVMENYDPTFAATARELRTALPTASSPSTLPGAILLSGYNFGTGSSREQAATAIKNAGIPLVICGSFGDIFKRNSINNGLILIESPSLIKDMTERFAKDGVRNKGGKDGKLTVVPEGWRIKVDSQRGLVTVNMGEEEEKTYPAAKVGRSVQELWVNGGLEGFIRASL.

A mitochondrion-targeting transit peptide spans 1 to 24; the sequence is MVAIPRLARLSVPAWALSARGRFY. [4Fe-4S] cluster-binding residues include Cys-362, Cys-422, and Cys-425.

Belongs to the aconitase/IPM isomerase family. Requires [4Fe-4S] cluster as cofactor.

Its subcellular location is the mitochondrion. The enzyme catalyses (2R,3S)-homoisocitrate = cis-homoaconitate + H2O. It participates in amino-acid biosynthesis; L-lysine biosynthesis via AAA pathway; L-alpha-aminoadipate from 2-oxoglutarate: step 3/5. Catalyzes the reversible hydration of cis-homoaconitate to (2R,3S)-homoisocitrate, a step in the alpha-aminoadipate pathway for lysine biosynthesis. The sequence is that of Homoaconitase, mitochondrial (LYS4) from Cryptococcus neoformans var. neoformans serotype D (strain B-3501A) (Filobasidiella neoformans).